A 404-amino-acid chain; its full sequence is Epoxide hydrolase 1 (404 aa).

The helical transmembrane segment at 74 to 96 (ILVRLLQFYYFVKFSAILFLGFA) threads the bilayer. The region spanning 140-389 (PLMLFIHGYP…ASHWVQQDEP (250 aa)) is the AB hydrolase-1 domain. Asp215 serves as the catalytic Nucleophile. Residue Tyr327 is the Proton donor of the active site. The active-site Proton acceptor is the His382.

It belongs to the AB hydrolase superfamily. Epoxide hydrolase family.

The protein localises to the membrane. It catalyses the reaction an epoxide + H2O = an ethanediol. The enzyme catalyses 8,9-epoxy-(5Z,11Z,14Z)-eicosatrienoate + H2O = 8,9-dihydroxy-(5Z,11Z,14Z)-eicosatrienoate. The catalysed reaction is 11,12-epoxy-(5Z,8Z,14Z)-eicosatrienoate + H2O = 11,12-dihydroxy-(5Z,8Z,14Z)-eicosatrienoate. It carries out the reaction 14,15-epoxy-(5Z,8Z,11Z)-eicosatrienoate + H2O = 14,15-dihydroxy-(5Z,8Z,11Z)-eicosatrienoate. It catalyses the reaction 12,13-epoxy-(9Z)-octadecenoate + H2O = 12,13-dihydroxy-(9Z)-octadecenoate. The enzyme catalyses 9,10-epoxy-(12Z)-octadecenoate + H2O = 9,10-dihydroxy-(12Z)-octadecenoate. It participates in lipid metabolism. Its function is as follows. Catalyzes the hydrolysis of epoxide-containing fatty acids. Active against epoxyeicosatrienoic acids (EETs) including 8,9-epoxy-(5Z,11Z,14Z)-eicosatrienoate (8,9-EET), 11,12-epoxy-(5Z,8Z,14Z)-eicosatrienoate (11,12-EET) and 14,15-epoxy-(5Z,8Z,11Z)-eicosatrienoate (14,15-EET) and the linoleic acid metabolites 12,13-epoxy-(9Z)-octadecenoate (12,13-EpOME) and 9,10-epoxy-(12Z)-octadecenoate (9,10-EpOME). These epoxides function as lipid signaling molecules, the enzyme can deplete the supply of the epoxide signal by transforming them into diol species that are more readily eliminated through excretion. This chain is Epoxide hydrolase 1, found in Caenorhabditis elegans.